We begin with the raw amino-acid sequence, 419 residues long: MVTVEEVRNAQRAEGPATVLAIGTATPSNCVDQSTYPDYYFRITDSEHKTELKEKFKRICDKSMIKKRYMHLTEKILKENPNICESMAPSLDARTNIYAVEVPKLGKEAAEKAIEEWNQPKSRITHLVFCTTTGVSMPGADFQLTKLLGLGSSVKRFMMNQLGCFAGGTVLRLAKDLAENNKGARVLVVCSEITVVTFRGPNDTHFDSLVGQALFGDGAAAVIIGSDPIPNVERPLFELVSAAQTLLPDSKNSICGELREIGLTFHLLKDVAELISNNIEKSLVEVFQPLGISAWNSIFWVAHPGGPAILNQVELKLGLNPEKLGATRHVLSEYGNMSSASILFVLDEMRKSSTQKGFDTTGEGLKWGVLIGFGPGITFETIVLHSVSTQGSFGIRDWDYNFGIEFKIIFIPYLVLGIS.

Cys-164 is an active-site residue.

This sequence belongs to the thiolase-like superfamily. Chalcone/stilbene synthases family.

The enzyme catalyses (E)-4-coumaroyl-CoA + 3 malonyl-CoA + 3 H(+) = 2',4,4',6'-tetrahydroxychalcone + 3 CO2 + 4 CoA. It participates in secondary metabolite biosynthesis; flavonoid biosynthesis. The primary product of this enzyme is 4,2',4',6'-tetrahydroxychalcone (also termed naringenin-chalcone or chalcone) which can under specific conditions spontaneously isomerize into naringenin. The protein is Chalcone synthase D (CHSD) of Petunia hybrida (Petunia).